The sequence spans 474 residues: Trehalose-6-phosphate synthase (474 aa).

Arginine 10 contacts D-glucose 6-phosphate. UDP-alpha-D-glucose is bound at residue 22 to 23; sequence GG. Residues tyrosine 77 and aspartate 131 each coordinate D-glucose 6-phosphate. UDP-alpha-D-glucose is bound by residues arginine 263 and lysine 268. Position 301 (arginine 301) interacts with D-glucose 6-phosphate. UDP-alpha-D-glucose is bound by residues phenylalanine 340 and 366–370; that span reads LVAKE.

The protein belongs to the glycosyltransferase 20 family. Homotetramer.

It catalyses the reaction D-glucose 6-phosphate + UDP-alpha-D-glucose = alpha,alpha-trehalose 6-phosphate + UDP + H(+). It functions in the pathway glycan biosynthesis; trehalose biosynthesis. Probably involved in the osmoprotection via the biosynthesis of trehalose. Catalyzes the transfer of glucose from UDP-alpha-D-glucose (UDP-Glc) to D-glucose 6-phosphate (Glc-6-P) to form trehalose-6-phosphate. Acts with retention of the anomeric configuration of the UDP-sugar donor. This Pseudomonas savastanoi (Pseudomonas syringae pv. savastanoi) protein is Trehalose-6-phosphate synthase.